A 169-amino-acid polypeptide reads, in one-letter code: MAPPWVPAVGFTLLPSLGGFLGAQYTRGEGFRWYASLQKPPWHPPRWILAPIWGTLYSAMGYGSYMIWKELGGFSKEAVVPLGLYAGQLALNWAWPPLFFGTRQMGWALVDLLLTGGMAAATAMAWHQVSPPAACLLYPYLAWLAFAGMLNYRMWQDNQVRRSGRRLSE.

Residues 1–5 (MAPPW) are Mitochondrial intermembrane-facing. A helical membrane pass occupies residues 6-26 (VPAVGFTLLPSLGGFLGAQYT). Residues 27–46 (RGEGFRWYASLQKPPWHPPR) lie on the Cytoplasmic side of the membrane. The helical transmembrane segment at 47–67 (WILAPIWGTLYSAMGYGSYMI) threads the bilayer. The Mitochondrial intermembrane segment spans residues 68 to 79 (WKELGGFSKEAV). Residues 80–100 (VPLGLYAGQLALNWAWPPLFF) traverse the membrane as a helical segment. At 101 to 105 (GTRQM) the chain is on the cytoplasmic side. Residues 106-126 (GWALVDLLLTGGMAAATAMAW) form a helical membrane-spanning segment. Residues 127-134 (HQVSPPAA) are Mitochondrial intermembrane-facing. Residues 135-155 (CLLYPYLAWLAFAGMLNYRMW) traverse the membrane as a helical segment. Residues 156–169 (QDNQVRRSGRRLSE) are Cytoplasmic-facing.

This sequence belongs to the TspO/BZRP family. Interacts with TSPOAP1. Interacts with MOST-1. May interact with STAR.

Its subcellular location is the mitochondrion membrane. The protein resides in the membrane. Promotes the transport of cholesterol across mitochondrial membranes and may play a role in lipid metabolism, but its precise physiological role is controversial. It is apparently not required for steroid hormone biosynthesis. Can bind protoporphyrin IX and may play a role in the transport of porphyrins and heme. Was initially identified as peripheral-type benzodiazepine receptor; can also bind isoquinoline carboxamides. In Bos taurus (Bovine), this protein is Translocator protein (TSPO).